Reading from the N-terminus, the 31-residue chain is Protamine-1B (31 aa).

The disordered stretch occupies residues 1 to 31 (MPRRRRASRRIRRRRRPRVSRRRRRGGRRRR).

In terms of tissue distribution, testis.

It localises to the nucleus. The protein resides in the chromosome. Its function is as follows. Protamines substitute for histones in the chromatin of sperm during the haploid phase of spermatogenesis. They compact sperm DNA into a highly condensed, stable and inactive complex. The protein is Protamine-1B of Oncorhynchus mykiss (Rainbow trout).